A 399-amino-acid polypeptide reads, in one-letter code: V-set and immunoglobulin domain-containing protein 4 (399 aa).

Positions 1–19 (MGILLGLLLLGHLTVDTYG) are cleaved as a signal peptide. Residues 20-283 (RPILEVPESV…TSAGPGKSLP (264 aa)) are Extracellular-facing. Ig-like domains lie at 21–131 (PILE…DKIT) and 143–226 (PTVT…SDIV). Intrachain disulfides connect Cys-41–Cys-113 and Cys-165–Cys-211. Residues 284–304 (VFAIILIISLCCMVVFTMAYI) form a helical membrane-spanning segment. Over 305 to 399 (MLCRKTSQQE…FLATEGKSVC (95 aa)) the chain is Cytoplasmic.

Abundantly expressed in several fetal tissues. In adult tissues, highest expression in lung and placenta. Expressed in resting macrophages.

It localises to the membrane. Phagocytic receptor, strong negative regulator of T-cell proliferation and IL2 production. Potent inhibitor of the alternative complement pathway convertases. The chain is V-set and immunoglobulin domain-containing protein 4 (VSIG4) from Homo sapiens (Human).